The primary structure comprises 859 residues: Probable potassium transporter 14 (859 aa).

The segment covering 1 to 19 (METRSGGSGSASGGGGGGR) has biased composition (gly residues). The interval 1–69 (METRSGGSGS…SRGGCSDSDD (69 aa)) is disordered. The Cytoplasmic portion of the chain corresponds to 1–112 (METRSGGSGS…RHQEITVGRS (112 aa)). A compositionally biased stretch (low complexity) spans 54–65 (PAAASGSRGGCS). A helical membrane pass occupies residues 113 to 133 (IVLAVQTLGVVFGDVGTSPLY). At 134–155 (AFDVMFNKYPITSKEDVLGALS) the chain is on the extracellular side. Residues 156 to 176 (LVIYTLILIPLLKYTLIALWG) form a helical membrane-spanning segment. Topologically, residues 177 to 240 (NDDGEGGTFA…RLETSSMLKK (64 aa)) are cytoplasmic. A helical transmembrane segment spans residues 241–261 (LLLMLVLFGTSMVIADGVVTP). The Extracellular segment spans residues 262-275 (AMSVMSAVNGLKVG). Residues 276–296 (ISSVNEGEVVMITVAVLIVLF) traverse the membrane as a helical segment. Residues 297 to 305 (TLQRFGSSK) lie on the Cytoplasmic side of the membrane. Residues 306 to 326 (VALAVGPALFIWFCCLAGIGI) form a helical membrane-spanning segment. Residues 327 to 359 (YNMKTYGSAVLQAFNPMYIYYYFERNPTQAWMS) lie on the Extracellular side of the membrane. Residues 360–380 (LGGCLLCATGSEAMFADLCYF) traverse the membrane as a helical segment. Over 381-388 (SVKSVQLT) the chain is Cytoplasmic. The helical transmembrane segment at 389–409 (FVFLVLPCLLLGYLGQAAFLM) threads the bilayer. Residues 410–417 (ENLTENQQ) are Extracellular-facing. An N-linked (GlcNAc...) asparagine glycan is attached at Asn411. A helical transmembrane segment spans residues 418-438 (VFFLSIPNQAFWPVVFIAILA). The Cytoplasmic portion of the chain corresponds to 439–478 (AIIASRTMTTAIFSTIKQATALGCFPRLKIIHTSRSFMGQ). Residues 479–499 (IYIPMMNWFLLVSCLAFVTMF) form a helical membrane-spanning segment. Residues 500–508 (GSINEIGNA) are Extracellular-facing. Residues 509–531 (YGIAELGVMMMTTVLVTIIMLLI) form a helical membrane-spanning segment. Over 532–535 (WQIN) the chain is Cytoplasmic. Residues 536–558 (IIVVLCFLTLSLGLELIFFSSVL) traverse the membrane as a helical segment. The Extracellular segment spans residues 559–560 (GS). Residues 561–581 (VADGSWVLLVFAAVLYLIMYI) form a helical membrane-spanning segment. The Cytoplasmic portion of the chain corresponds to 582-859 (WNYGTKLKYE…MMQVAMQYMV (278 aa)). The disordered stretch occupies residues 752–772 (GVPPAEAAGTTEHPTIGSSMS). A compositionally biased stretch (polar residues) spans 763 to 772 (EHPTIGSSMS).

Belongs to the HAK/KUP transporter (TC 2.A.72.3) family.

It localises to the membrane. Functionally, high-affinity potassium transporter. The polypeptide is Probable potassium transporter 14 (HAK14) (Oryza sativa subsp. japonica (Rice)).